The sequence spans 337 residues: Transcription factor HBI1 (337 aa).

Positions 119–180 (VALKNKRKPE…SKGASENQKL (62 aa)) are disordered. A compositionally biased stretch (basic and acidic residues) spans 126–151 (KPEVKTREEQKTEKKIKVEAETESSM). The span at 152 to 165 (KGKSNMGNTEASSD) shows a compositional bias: polar residues. The region spanning 191–241 (QATDRHSLAERARREKISKKMKYLQDIVPGCNKVTGKAGMLDEIINYVQCL) is the bHLH domain.

As to quaternary structure, homodimer. Interacts with IBH1. As to expression, highly expressed in hypocotyls and cotyledons. Expressed in leaves, stems, and flowers.

The protein resides in the nucleus. Atypical bHLH transcription factor that acts as a positive regulator of cell elongation downstream of multiple external and endogenous signals by direct binding to the promoters and activation of the two expansin genes EXPA1 and EXPA8, encoding cell wall loosening enzymes. Transcriptional activity is inhibited when binding to the bHLH transcription factor IBH1. The polypeptide is Transcription factor HBI1 (HBI1) (Arabidopsis thaliana (Mouse-ear cress)).